We begin with the raw amino-acid sequence, 1529 residues long: DNA (cytosine-5)-methyltransferase 1B (1529 aa).

2 disordered regions span residues 1–56 (MVKS…RAAC) and 674–706 (DDEL…TRSR). The span at 21 to 35 (QKKDEDTTDKGKLDE) shows a compositional bias: basic and acidic residues. Acidic residues predominate over residues 674-694 (DDELEENEDEDAEEEAQIEEE). Residues 697 to 706 (SKTPPSTRSR) show a composition bias toward polar residues. 2 BAH domains span residues 741-873 (LRIN…FSLP) and 910-1049 (ITYN…KQLP). One can recognise an SAM-dependent MTase C5-type domain in the interval 1093-1527 (LATLDIFAGC…RKLKEAVDAK (435 aa)). The active site involves cysteine 1198.

This sequence belongs to the class I-like SAM-binding methyltransferase superfamily. C5-methyltransferase family. In terms of tissue distribution, expressed in roots and inflorescences. Expressed in roots, panicles, anthers, pistils, endosperm and imbibed embryos. Expressed in tissues containing actively replicating and dividing cells, such as shoot and root meristems.

The protein localises to the nucleus. The enzyme catalyses a 2'-deoxycytidine in DNA + S-adenosyl-L-methionine = a 5-methyl-2'-deoxycytidine in DNA + S-adenosyl-L-homocysteine + H(+). In terms of biological role, major CG methylase that methylates chromatin CpG residues and maintains DNA methylation. Plays a major role in genomic imprinting, regulation of embryogenesis and seed viability. Maintains DNA methylation at the FIE1 gene locus in the embryo. The polypeptide is DNA (cytosine-5)-methyltransferase 1B (MET1B) (Oryza sativa subsp. japonica (Rice)).